A 71-amino-acid polypeptide reads, in one-letter code: Large ribosomal subunit protein bL31 (71 aa).

Residues Cys-16, Cys-18, Cys-37, and Cys-40 each coordinate Zn(2+).

This sequence belongs to the bacterial ribosomal protein bL31 family. Type A subfamily. In terms of assembly, part of the 50S ribosomal subunit. It depends on Zn(2+) as a cofactor.

Its function is as follows. Binds the 23S rRNA. The protein is Large ribosomal subunit protein bL31 of Yersinia pseudotuberculosis serotype O:1b (strain IP 31758).